We begin with the raw amino-acid sequence, 366 residues long: S-adenosylmethionine:tRNA ribosyltransferase-isomerase (366 aa).

Belongs to the QueA family. In terms of assembly, monomer.

Its subcellular location is the cytoplasm. It catalyses the reaction 7-aminomethyl-7-carbaguanosine(34) in tRNA + S-adenosyl-L-methionine = epoxyqueuosine(34) in tRNA + adenine + L-methionine + 2 H(+). The protein operates within tRNA modification; tRNA-queuosine biosynthesis. In terms of biological role, transfers and isomerizes the ribose moiety from AdoMet to the 7-aminomethyl group of 7-deazaguanine (preQ1-tRNA) to give epoxyqueuosine (oQ-tRNA). In Bradyrhizobium diazoefficiens (strain JCM 10833 / BCRC 13528 / IAM 13628 / NBRC 14792 / USDA 110), this protein is S-adenosylmethionine:tRNA ribosyltransferase-isomerase.